Consider the following 317-residue polypeptide: MEVRYSQDSESGMLLKNGLKEGKEGKDSQGSISKTFLKDQQESFSPSGAVENCEKSRASSGDPDYCRRILVRDAKGSIREIILPKGLDLDRPKRTRTSFTAEQLYRLEMEFQRCQYVVGRERTELARQLNLSETQVKVWFQNRRTKQKKDQGKDSELRSVVSETAATCSVLRLLEQGRLLTPPGLPGLLPHCGSSSLGSALRGPSLGITANGGSSSSSRSSAGSSGTAGGSPPLPTVTSSGTVTGLQGSPPAHGLFSFPMPSLLGSVASRISSTPLGMAGSLAGNLQELSARYLCSSAFEPYSRTNGKEALDKKVLE.

A disordered region spans residues 1–62 (MEVRYSQDSE…CEKSRASSGD (62 aa)). The span at 18–27 (GLKEGKEGKD) shows a compositional bias: basic and acidic residues. The segment at residues 92-151 (PKRTRTSFTAEQLYRLEMEFQRCQYVVGRERTELARQLNLSETQVKVWFQNRRTKQKKDQ) is a DNA-binding region (homeobox). The disordered stretch occupies residues 203–248 (GPSLGITANGGSSSSSRSSAGSSGTAGGSPPLPTVTSSGTVTGLQG). Over residues 212-225 (GGSSSSSRSSAGSS) the composition is skewed to low complexity. The span at 236 to 247 (TVTSSGTVTGLQ) shows a compositional bias: polar residues.

It belongs to the EMX homeobox family. As to expression, expressed in the anterior neural keel and later in the preoptic area and optic stalk.

Its subcellular location is the nucleus. In terms of biological role, transcription factor that is required for closure of the choroid fissure and together with Vax2 is required for optic nerve differentiation and to limit retinal development to the optic cup. This chain is Ventral anterior homeobox 1 (vax1), found in Danio rerio (Zebrafish).